A 502-amino-acid polypeptide reads, in one-letter code: L-arabinose isomerase (502 aa).

Mn(2+)-binding residues include Glu306, Glu333, His350, and His449.

Belongs to the arabinose isomerase family. Mn(2+) is required as a cofactor.

It carries out the reaction beta-L-arabinopyranose = L-ribulose. The protein operates within carbohydrate degradation; L-arabinose degradation via L-ribulose; D-xylulose 5-phosphate from L-arabinose (bacterial route): step 1/3. Functionally, catalyzes the conversion of L-arabinose to L-ribulose. This is L-arabinose isomerase from Flavobacterium johnsoniae (strain ATCC 17061 / DSM 2064 / JCM 8514 / BCRC 14874 / CCUG 350202 / NBRC 14942 / NCIMB 11054 / UW101) (Cytophaga johnsonae).